Reading from the N-terminus, the 49-residue chain is uncharacterized protein (49 aa).

The helical transmembrane segment at 16-36 (WTCHTGFYLMILLVLFFMYGF) threads the bilayer.

The protein localises to the cell membrane. This is an uncharacterized protein from Bacillus subtilis (strain 168).